The chain runs to 503 residues: Hexose transporter 1 (503 aa).

Residues 1 to 26 are Cytoplasmic-facing; sequence MKKSSKEISPSQSLKNGGSDHFFNTS. Residues 27–47 form a helical membrane-spanning segment; that stretch reads LMYVLAACLASFIFGYQVSVL. The Extracellular portion of the chain corresponds to 48-76; the sequence is NTIKNFIVIEFGWCTGNKVECDDSTLKSS. A disulfide bond links C61 and C68. A helical transmembrane segment spans residues 77-97; sequence FLLASVFIGAVVGSGFSDYLV. At 98–102 the chain is on the cytoplasmic side; that stretch reads QHGRR. The helical transmembrane segment at 103–123 threads the bilayer; that stretch reads FSLLVIYNFFILVSILTSITH. Residues 124-132 lie on the Extracellular side of the membrane; the sequence is HFHTILFSR. The chain crosses the membrane as a helical span at residues 133-153; it reads LLSGFGVGLITVSVPMYISEM. The Cytoplasmic portion of the chain corresponds to 154–163; the sequence is THKDKKGAYG. A helical membrane pass occupies residues 164–184; sequence VLHQLFITFGILVAVLLGMAM. Position 167 (Q167) interacts with alpha-D-glucose. Q167 contributes to the beta-D-glucose binding site. The Extracellular portion of the chain corresponds to 185–205; it reads GEAPDAKSVDALGEFQKIWWR. The helical transmembrane segment at 206–226 threads the bilayer; the sequence is LMFFFPCLISILGIVLLTFFY. Residues 227–291 lie on the Cytoplasmic side of the membrane; that stretch reads KEETPYYLFE…RAMQIPSYRN (65 aa). The helical transmembrane segment at 292 to 312 threads the bilayer; sequence VILLGCILSGLQQFTGINVLV. The alpha-D-glucose site is built by Q303, Q304, and N309. A beta-D-glucose-binding site is contributed by Q303. N309 contacts beta-D-glucose. The Extracellular segment spans residues 313-329; that stretch reads SNSNELYKEFLSNKLIT. A helical transmembrane segment spans residues 330–350; that stretch reads TLSVIMTVVNFLMTFPAIYIV. Beta-D-glucose is bound at residue N339. At 351–356 the chain is on the cytoplasmic side; sequence EKLGRK. A helical membrane pass occupies residues 357 to 377; it reads TLLLCGCAGVTLAAFLPTAIA. Residues 378-391 lie on the Extracellular side of the membrane; sequence NQIDRSSDLVRNLS. A helical transmembrane segment spans residues 392 to 412; sequence IAATFVMIISFAVSYGPVLWI. W411 contributes to the alpha-D-glucose binding site. Topologically, residues 413 to 428 are cytoplasmic; the sequence is YLHEMFPSEIKDSAAS. A helical transmembrane segment spans residues 429-449; sequence LASLVNWVCAIIVVFPSDIII. Over 450 to 454 the chain is Extracellular; it reads KKSPT. The chain crosses the membrane as a helical span at residues 455-475; it reads ILFFIFSGMSILSFLFIFFFI. At 476-503 the chain is on the cytoplasmic side; that stretch reads KETKGGEIGTSPYITMEERQKHMGKSAV.

This sequence belongs to the major facilitator superfamily. Sugar transporter (TC 2.A.1.1) family. In terms of assembly, homodimer.

The protein resides in the cell membrane. The catalysed reaction is D-glucose(out) = D-glucose(in). It catalyses the reaction D-fructose(out) = D-fructose(in). It carries out the reaction D-galactose(in) = D-galactose(out). The enzyme catalyses D-mannose(out) = D-mannose(in). The catalysed reaction is D-glucosamine(out) = D-glucosamine(in). It catalyses the reaction D-xylose(out) = D-xylose(in). Inhibited by compound 3361 (3-O-((undec-10-en)-1-yl)-D-glucose). In terms of biological role, sodium-independent facilitative hexose transporter. Can transport D-glucose and D-fructose. Can transport D-mannose, D-galactose, D-xylose and D-glucosamine. The polypeptide is Hexose transporter 1 (Plasmodium vivax).